The chain runs to 380 residues: Transporter PPE51 (380 aa).

An N-acetylmethionine modification is found at methionine 1.

It belongs to the mycobacterial PPE family. In terms of assembly, interacts with PE19 and PE25.

It localises to the cell outer membrane. In terms of biological role, small molecule-selective channel required for the uptake of nutrients across the outer mycomembrane. Transports glycerol and glucose. Involved in sensitivity to M.tuberculosis growth inhibitory agrichemical 3,3-bis-di(methylsulfonyl)propionamide (3bMP1). Transports maltose and lactose disaccharides. Involved in sensitivity to bactericidal thio-disaccharide T-6 compound (1,6-anhydro-3-deoxy-4-S-(2,3,4,6-tetra-O-acetyl-beta-D-glucopyranosyl)-D-glycero-hexopyranos-2-ulose). Transports extracellular trehalose, a component of the cell envelope, and trehalose analog, 6-azido trehalose (6-TreAz), which has antimycobacterial activity. Plays a role in response to starvation and stress, likely environment within the host. Inhibits canonical autophagy in infected mouse RAW264.7 macrophages. Inhibits autophagy and enhances intracellular bacterial survival when expressed in human macrophage-like THP-1 cells. Inhibits Toll-like receptor 2 (TLR2)-dependent signaling leading to autophagy inhibition, increased intracellular bacterial survival, reduced phagocytosis and reduced secretion of interleukin 6 (IL-6) and IL-1 in infected mouse primary bone marrow-derived macrophage (BMDM) cells. Required for virulence and persistence in the lungs and spleens of intranasally infected C57BL/6J mice. Blocks the antibacterial effects of TLR2 activation, suppresses MHC class II-dependent antigen presentation, and reduces IFN-gamma and TNF-alpha-producing CD4(+) T cells during infection in C57BL/6J mice. This Mycobacterium tuberculosis (strain CDC 1551 / Oshkosh) protein is Transporter PPE51 (PPE51).